A 362-amino-acid chain; its full sequence is Aminomethyltransferase (362 aa).

It belongs to the GcvT family. The glycine cleavage system is composed of four proteins: P, T, L and H.

The catalysed reaction is N(6)-[(R)-S(8)-aminomethyldihydrolipoyl]-L-lysyl-[protein] + (6S)-5,6,7,8-tetrahydrofolate = N(6)-[(R)-dihydrolipoyl]-L-lysyl-[protein] + (6R)-5,10-methylene-5,6,7,8-tetrahydrofolate + NH4(+). Its function is as follows. The glycine cleavage system catalyzes the degradation of glycine. In Listeria innocua serovar 6a (strain ATCC BAA-680 / CLIP 11262), this protein is Aminomethyltransferase.